A 274-amino-acid polypeptide reads, in one-letter code: 3-methyl-2-oxobutanoate hydroxymethyltransferase (274 aa).

The Mg(2+) site is built by Asp50 and Asp89. 3-methyl-2-oxobutanoate contacts are provided by residues 50–51 (DS), Asp89, and Lys119. Glu121 provides a ligand contact to Mg(2+). Catalysis depends on Glu188, which acts as the Proton acceptor.

It belongs to the PanB family. As to quaternary structure, homodecamer; pentamer of dimers. It depends on Mg(2+) as a cofactor.

The protein resides in the cytoplasm. It catalyses the reaction 3-methyl-2-oxobutanoate + (6R)-5,10-methylene-5,6,7,8-tetrahydrofolate + H2O = 2-dehydropantoate + (6S)-5,6,7,8-tetrahydrofolate. It functions in the pathway cofactor biosynthesis; (R)-pantothenate biosynthesis; (R)-pantoate from 3-methyl-2-oxobutanoate: step 1/2. Catalyzes the reversible reaction in which hydroxymethyl group from 5,10-methylenetetrahydrofolate is transferred onto alpha-ketoisovalerate to form ketopantoate. In Methylorubrum extorquens (strain PA1) (Methylobacterium extorquens), this protein is 3-methyl-2-oxobutanoate hydroxymethyltransferase.